Consider the following 239-residue polypeptide: Large ribosomal subunit protein uL1 (239 aa).

This sequence belongs to the universal ribosomal protein uL1 family. As to quaternary structure, part of the 50S ribosomal subunit.

Binds directly to 23S rRNA. The L1 stalk is quite mobile in the ribosome, and is involved in E site tRNA release. In terms of biological role, protein L1 is also a translational repressor protein, it controls the translation of the L11 operon by binding to its mRNA. The polypeptide is Large ribosomal subunit protein uL1 (Rhodococcus erythropolis (strain PR4 / NBRC 100887)).